Consider the following 863-residue polypeptide: DNA mismatch repair protein MutS (863 aa).

Position 615–622 (615–622) interacts with ATP; the sequence is GPNMAGKS.

Belongs to the DNA mismatch repair MutS family.

Its function is as follows. This protein is involved in the repair of mismatches in DNA. It is possible that it carries out the mismatch recognition step. This protein has a weak ATPase activity. This chain is DNA mismatch repair protein MutS, found in Pelotomaculum thermopropionicum (strain DSM 13744 / JCM 10971 / SI).